We begin with the raw amino-acid sequence, 484 residues long: Calcium-dependent protein kinase 26 (484 aa).

In terms of domain architecture, Protein kinase spans tyrosine 24–isoleucine 282. Residues leucine 30–threonine 38 and lysine 53 contribute to the ATP site. The active-site Proton acceptor is aspartate 148. Serine 188 bears the Phosphoserine mark. An autoinhibitory domain region spans residues alanine 288 to isoleucine 318. EF-hand domains follow at residues glutamate 325–threonine 360, leucine 361–leucine 396, glutamate 397–serine 432, and leucine 436–glycine 466. Residues aspartate 338, aspartate 340, serine 342, glutamate 349, aspartate 374, aspartate 376, serine 378, threonine 380, glutamate 385, aspartate 410, aspartate 412, serine 414, tyrosine 416, glutamate 421, aspartate 444, aspartate 446, aspartate 448, arginine 450, and glutamate 455 each coordinate Ca(2+).

The protein belongs to the protein kinase superfamily. Ser/Thr protein kinase family. CDPK subfamily.

It catalyses the reaction L-seryl-[protein] + ATP = O-phospho-L-seryl-[protein] + ADP + H(+). The catalysed reaction is L-threonyl-[protein] + ATP = O-phospho-L-threonyl-[protein] + ADP + H(+). Activated by calcium. Autophosphorylation may play an important role in the regulation of the kinase activity. Its function is as follows. May play a role in signal transduction pathways that involve calcium as a second messenger. The protein is Calcium-dependent protein kinase 26 (CPK26) of Arabidopsis thaliana (Mouse-ear cress).